The following is a 436-amino-acid chain: Acetyl-CoA decarbonylase/synthase complex subunit delta 1 (436 aa).

It belongs to the CdhD family. In terms of assembly, heterodimer of delta and gamma chains. The ACDS complex is made up of alpha, epsilon, beta, gamma and delta chains with a probable stoichiometry of (alpha(2)epsilon(2))(4)-beta(8)-(gamma(1)delta(1))(8) (Potential).

It participates in one-carbon metabolism; methanogenesis from acetate. In terms of biological role, part of a complex that catalyzes the reversible cleavage of acetyl-CoA, allowing growth on acetate as sole source of carbon and energy. Probably maintains the overall quaternary structure of the ACDS complex. In Methanosarcina acetivorans (strain ATCC 35395 / DSM 2834 / JCM 12185 / C2A), this protein is Acetyl-CoA decarbonylase/synthase complex subunit delta 1 (cdhD1).